Reading from the N-terminus, the 450-residue chain is Bifunctional protein GlmU (450 aa).

The segment at 1 to 229 is pyrophosphorylase; it reads MRRHAIILAA…VEEIMGVNDR (229 aa). UDP-N-acetyl-alpha-D-glucosamine contacts are provided by residues 8–11, Lys-22, Gln-72, and 77–78; these read LAAG and GT. Mg(2+) is bound at residue Asp-102. UDP-N-acetyl-alpha-D-glucosamine contacts are provided by Gly-139, Glu-154, and Asn-227. Asn-227 is a Mg(2+) binding site. Residues 230-250 form a linker region; sequence VMLSQAEKAMQRRTNHYHMLN. The segment at 251–450 is N-acetyltransferase; sequence GVTIIDPDST…RQTTKEGYRK (200 aa). UDP-N-acetyl-alpha-D-glucosamine-binding residues include Arg-332 and Lys-350. Residue His-362 is the Proton acceptor of the active site. UDP-N-acetyl-alpha-D-glucosamine is bound by residues Tyr-365 and Asn-376. Residues 385-386, Ala-422, and Arg-439 each bind acetyl-CoA; that span reads NY.

In the N-terminal section; belongs to the N-acetylglucosamine-1-phosphate uridyltransferase family. This sequence in the C-terminal section; belongs to the transferase hexapeptide repeat family. In terms of assembly, homotrimer. Mg(2+) serves as cofactor.

The protein resides in the cytoplasm. It catalyses the reaction alpha-D-glucosamine 1-phosphate + acetyl-CoA = N-acetyl-alpha-D-glucosamine 1-phosphate + CoA + H(+). The enzyme catalyses N-acetyl-alpha-D-glucosamine 1-phosphate + UTP + H(+) = UDP-N-acetyl-alpha-D-glucosamine + diphosphate. It participates in nucleotide-sugar biosynthesis; UDP-N-acetyl-alpha-D-glucosamine biosynthesis; N-acetyl-alpha-D-glucosamine 1-phosphate from alpha-D-glucosamine 6-phosphate (route II): step 2/2. Its pathway is nucleotide-sugar biosynthesis; UDP-N-acetyl-alpha-D-glucosamine biosynthesis; UDP-N-acetyl-alpha-D-glucosamine from N-acetyl-alpha-D-glucosamine 1-phosphate: step 1/1. It functions in the pathway bacterial outer membrane biogenesis; LPS lipid A biosynthesis. Its function is as follows. Catalyzes the last two sequential reactions in the de novo biosynthetic pathway for UDP-N-acetylglucosamine (UDP-GlcNAc). The C-terminal domain catalyzes the transfer of acetyl group from acetyl coenzyme A to glucosamine-1-phosphate (GlcN-1-P) to produce N-acetylglucosamine-1-phosphate (GlcNAc-1-P), which is converted into UDP-GlcNAc by the transfer of uridine 5-monophosphate (from uridine 5-triphosphate), a reaction catalyzed by the N-terminal domain. In Staphylococcus aureus (strain USA300), this protein is Bifunctional protein GlmU.